A 296-amino-acid polypeptide reads, in one-letter code: GTPase Era (296 aa).

The Era-type G domain maps to 3–170 (KSGFVTIVGR…KELMFKYIPE (168 aa)). A G1 region spans residues 11 to 18 (GRPNVGKS). 11–18 (GRPNVGKS) lines the GTP pocket. The tract at residues 37–41 (QTTRN) is G2. The segment at 58-61 (DTPG) is G3. Residues 58–62 (DTPGI) and 120–123 (NKID) each bind GTP. Residues 120 to 123 (NKID) form a G4 region. The segment at 149-151 (ISA) is G5. A KH type-2 domain is found at 201–278 (LSEEVPHGIA…YIRLWVKVKE (78 aa)).

Belongs to the TRAFAC class TrmE-Era-EngA-EngB-Septin-like GTPase superfamily. Era GTPase family. In terms of assembly, monomer.

It localises to the cytoplasm. The protein resides in the cell membrane. In terms of biological role, an essential GTPase that binds both GDP and GTP, with rapid nucleotide exchange. Plays a role in 16S rRNA processing and 30S ribosomal subunit biogenesis and possibly also in cell cycle regulation and energy metabolism. In Clostridium botulinum (strain Kyoto / Type A2), this protein is GTPase Era.